A 264-amino-acid chain; its full sequence is Ribonuclease HII (264 aa).

The RNase H type-2 domain maps to 69 to 263 (KVVCGIDEVG…EENAKTITKP (195 aa)). Residues Asp-75, Glu-76, and Asp-166 each coordinate a divalent metal cation.

Belongs to the RNase HII family. The cofactor is Mn(2+). It depends on Mg(2+) as a cofactor.

Its subcellular location is the cytoplasm. The enzyme catalyses Endonucleolytic cleavage to 5'-phosphomonoester.. Endonuclease that specifically degrades the RNA of RNA-DNA hybrids. The protein is Ribonuclease HII of Macrococcus caseolyticus (strain JCSC5402) (Macrococcoides caseolyticum).